We begin with the raw amino-acid sequence, 523 residues long: Probable E3 ubiquitin-protein ligase ZFP1 (523 aa).

Residues 18–28 (EQGHSHIHSES) show a composition bias toward basic and acidic residues. The disordered stretch occupies residues 18 to 43 (EQGHSHIHSESFNRTGNDSSDQGAQH). Polar residues predominate over residues 29–40 (FNRTGNDSSDQG). The RING-type; atypical zinc finger occupies 471 to 512 (CIICQEEYQVKECIGTLDCGHRYHEDCIKQWLMVKNLCPICK).

The protein belongs to the RING-type zinc finger family. In terms of assembly, interacts with DJA6.

The catalysed reaction is S-ubiquitinyl-[E2 ubiquitin-conjugating enzyme]-L-cysteine + [acceptor protein]-L-lysine = [E2 ubiquitin-conjugating enzyme]-L-cysteine + N(6)-ubiquitinyl-[acceptor protein]-L-lysine.. It participates in protein modification; protein ubiquitination. Probable E3 ubiquitin-protein ligase. The sequence is that of Probable E3 ubiquitin-protein ligase ZFP1 from Oryza sativa subsp. japonica (Rice).